We begin with the raw amino-acid sequence, 309 residues long: Sulfate adenylyltransferase subunit 2 (309 aa).

This sequence belongs to the PAPS reductase family. CysD subfamily. In terms of assembly, heterodimer composed of CysD, the smaller subunit, and CysN.

The catalysed reaction is sulfate + ATP + H(+) = adenosine 5'-phosphosulfate + diphosphate. It functions in the pathway sulfur metabolism; hydrogen sulfide biosynthesis; sulfite from sulfate: step 1/3. With CysN forms the ATP sulfurylase (ATPS) that catalyzes the adenylation of sulfate producing adenosine 5'-phosphosulfate (APS) and diphosphate, the first enzymatic step in sulfur assimilation pathway. APS synthesis involves the formation of a high-energy phosphoric-sulfuric acid anhydride bond driven by GTP hydrolysis by CysN coupled to ATP hydrolysis by CysD. This Mycobacterium bovis (strain ATCC BAA-935 / AF2122/97) protein is Sulfate adenylyltransferase subunit 2.